The sequence spans 1114 residues: Mediator of RNA polymerase II transcription subunit 14 (1114 aa).

Disordered regions lie at residues 1–27, 40–79, and 120–141; these read MPGV…QDGL, ANAQ…GPPE, and HGIH…SPGN. The segment covering 126–140 has biased composition (polar residues); sequence TAPTTGKSPGNQSPG.

Belongs to the Mediator complex subunit 14 family. In terms of assembly, component of the Mediator complex.

It localises to the nucleus. In terms of biological role, component of the Mediator complex, a coactivator involved in the regulated transcription of nearly all RNA polymerase II-dependent genes. Mediator functions as a bridge to convey information from gene-specific regulatory proteins to the basal RNA polymerase II transcription machinery. Mediator is recruited to promoters by direct interactions with regulatory proteins and serves as a scaffold for the assembly of a functional preinitiation complex with RNA polymerase II and the general transcription factors. In Aspergillus niger (strain ATCC MYA-4892 / CBS 513.88 / FGSC A1513), this protein is Mediator of RNA polymerase II transcription subunit 14 (rgr1).